Here is a 197-residue protein sequence, read N- to C-terminus: dTTP/UTP pyrophosphatase (197 aa).

Residue Asp70 is the Proton acceptor of the active site.

The protein belongs to the Maf family. YhdE subfamily. The cofactor is a divalent metal cation.

It is found in the cytoplasm. It carries out the reaction dTTP + H2O = dTMP + diphosphate + H(+). It catalyses the reaction UTP + H2O = UMP + diphosphate + H(+). In terms of biological role, nucleoside triphosphate pyrophosphatase that hydrolyzes dTTP and UTP. May have a dual role in cell division arrest and in preventing the incorporation of modified nucleotides into cellular nucleic acids. The polypeptide is dTTP/UTP pyrophosphatase (yceF2) (Shigella sonnei (strain Ss046)).